A 240-amino-acid polypeptide reads, in one-letter code: Phosphoribosylaminoimidazole-succinocarboxamide synthase (240 aa).

The protein belongs to the SAICAR synthetase family.

The catalysed reaction is 5-amino-1-(5-phospho-D-ribosyl)imidazole-4-carboxylate + L-aspartate + ATP = (2S)-2-[5-amino-1-(5-phospho-beta-D-ribosyl)imidazole-4-carboxamido]succinate + ADP + phosphate + 2 H(+). It functions in the pathway purine metabolism; IMP biosynthesis via de novo pathway; 5-amino-1-(5-phospho-D-ribosyl)imidazole-4-carboxamide from 5-amino-1-(5-phospho-D-ribosyl)imidazole-4-carboxylate: step 1/2. The protein is Phosphoribosylaminoimidazole-succinocarboxamide synthase of Pyrobaculum calidifontis (strain DSM 21063 / JCM 11548 / VA1).